Here is a 396-residue protein sequence, read N- to C-terminus: 2,3-diketo-5-methylthiopentyl-1-phosphate enolase (396 aa).

Catalysis depends on K85, which acts as the Proton acceptor. Substrate contacts are provided by residues K134, 160–163 (KDDE), H251, G323, and 345–346 (GG). Mg(2+)-binding residues include K160, D162, and E163. Residue K160 is modified to N6-carboxylysine.

The protein belongs to the RuBisCO large chain family. Type IV subfamily. As to quaternary structure, homodimer. Mg(2+) is required as a cofactor.

It carries out the reaction 5-methylsulfanyl-2,3-dioxopentyl phosphate = 2-hydroxy-5-methylsulfanyl-3-oxopent-1-enyl phosphate. The protein operates within amino-acid biosynthesis; L-methionine biosynthesis via salvage pathway; L-methionine from S-methyl-5-thio-alpha-D-ribose 1-phosphate: step 3/6. Its function is as follows. Catalyzes the enolization of 2,3-diketo-5-methylthiopentyl-1-phosphate (DK-MTP-1-P) into 2-hydroxy-3-keto-5-methylthiopentenyl-1-phosphate (HK-MTPenyl-1-P). This is 2,3-diketo-5-methylthiopentyl-1-phosphate enolase from Exiguobacterium sibiricum (strain DSM 17290 / CCUG 55495 / CIP 109462 / JCM 13490 / 255-15).